The chain runs to 385 residues: Odorant receptor 82a (385 aa).

Topologically, residues 1 to 32 are cytoplasmic; that stretch reads MGRLFQLQEYCLRAMGHKDDMDSTDSTALSLK. The chain crosses the membrane as a helical span at residues 33–53; the sequence is HISSLIFVISAQYPLISYVAY. Residues 54-62 lie on the Extracellular side of the membrane; it reads NRNDMEKVT. The chain crosses the membrane as a helical span at residues 63 to 83; that stretch reads ACLSVVFTNMLTVIKISTFLA. Over 84–131 the chain is Cytoplasmic; it reads NRKDFWEMIHRFRKMHEQSASHIPRYREGLDYVAEANKLASFLGRAYC. Residues 132–152 traverse the membrane as a helical segment; that stretch reads VSCGLTGLYFMLGPIVKIGVC. The Extracellular segment spans residues 153-186; sequence RWHGTTCDKELPMPMKFPFNDLESPGYEVCFLYT. The helical transmembrane segment at 187 to 207 threads the bilayer; the sequence is VLVTVVVVAYASAVDGLFISF. Over 208 to 257 the chain is Cytoplasmic; that stretch reads AINLRAHFQTLQRQIENWEFPSSEPDTQIRLKSIVEYHVLLLSLSRKLRS. A helical transmembrane segment spans residues 258-278; it reads IYTPTVMGQFVITSLQVGVII. Residues 279-290 are Extracellular-facing; the sequence is YQLVTNMDSVMD. A helical membrane pass occupies residues 291 to 311; sequence LLLYASFFGSIMLQLFIYCYG. Residues 312-357 are Cytoplasmic-facing; the sequence is GEIIKAESLQVDTAVRLSNWHLASPKTRTSLSLIILQSQKEVLIRA. The chain crosses the membrane as a helical span at residues 358 to 378; sequence GFFVASLANFVGICRTALSLI. The Extracellular portion of the chain corresponds to 379 to 385; that stretch reads TLIKSIE.

Belongs to the insect chemoreceptor superfamily. Heteromeric odorant receptor channel (TC 1.A.69) family. Or1a subfamily. As to quaternary structure, interacts with Orco. Complexes exist early in the endomembrane system in olfactory sensory neurons (OSNs), coupling these complexes to the conserved ciliary trafficking pathway. Expressed in olfactory sensory neurons in the antenna.

It is found in the cell membrane. Odorant receptor which mediates acceptance or avoidance behavior, depending on its substrates. The odorant receptor repertoire encodes a large collection of odor stimuli that vary widely in identity, intensity, and duration. May form a complex with Orco to form odorant-sensing units, providing sensitive and prolonged odorant signaling and calcium permeability. The sequence is that of Odorant receptor 82a (Or82a) from Drosophila melanogaster (Fruit fly).